A 398-amino-acid polypeptide reads, in one-letter code: Phospholipase C (398 aa).

The first 28 residues, 1–28 (MKKKFLKGLCCAFVISITCLGASSKAYG), serve as a signal peptide directing secretion. Zn(2+) is bound by residues tryptophan 29, histidine 39, aspartate 84, histidine 96, histidine 154, aspartate 158, histidine 164, histidine 176, and glutamate 180. Residues 29-278 (WDGKKDGTGT…YDVSKDLLPT (250 aa)) form the Zn-dependent PLC domain. Positions 275–283 (LLPTENHKI) are linker. The PLAT domain maps to 284–398 (NGLMVVIKTA…IHGNEKYYIN (115 aa)). Glycine 299, threonine 300, aspartate 301, aspartate 321, asparagine 322, glycine 324, asparagine 325, aspartate 326, and aspartate 364 together coordinate Ca(2+).

It belongs to the bacterial zinc-metallophospholipase C family. Ca(2+) is required as a cofactor. Requires Zn(2+) as cofactor.

The protein resides in the secreted. It catalyses the reaction a 1,2-diacyl-sn-glycero-3-phosphocholine + H2O = phosphocholine + a 1,2-diacyl-sn-glycerol + H(+). Functionally, bacterial hemolysins are exotoxins that attack blood cell membranes and cause cell rupture. Binds to eukaryotic membranes where it hydrolyzes phosphatidylcholine, sphingomyelin and phosphatidylethanolamine. The diacylglycerol produced can activate both the arachidonic acid pathway, leading to modulation of the inflammatory response cascade and thrombosis, and protein kinase C, leading to activation of eukaryotic phospholipases and further membrane damage. This enzyme is hemolytic against horse erythrocytes. The protein is Phospholipase C (plc) of Clostridium novyi.